The primary structure comprises 182 residues: Ribosome-recycling factor (182 aa).

This sequence belongs to the RRF family.

It is found in the cytoplasm. Responsible for the release of ribosomes from messenger RNA at the termination of protein biosynthesis. May increase the efficiency of translation by recycling ribosomes from one round of translation to another. The sequence is that of Ribosome-recycling factor from Prochlorococcus marinus subsp. pastoris (strain CCMP1986 / NIES-2087 / MED4).